Here is a 537-residue protein sequence, read N- to C-terminus: Eukaryotic translation initiation factor 3 subunit L (537 aa).

A PCI domain is found at 300-512 (TFSSILLYIQ…IHIADTKVSH (213 aa)).

It belongs to the eIF-3 subunit L family. As to quaternary structure, component of the eukaryotic translation initiation factor 3 (eIF-3) complex.

It is found in the cytoplasm. Component of the eukaryotic translation initiation factor 3 (eIF-3) complex, which is involved in protein synthesis of a specialized repertoire of mRNAs and, together with other initiation factors, stimulates binding of mRNA and methionyl-tRNAi to the 40S ribosome. The eIF-3 complex specifically targets and initiates translation of a subset of mRNAs involved in cell proliferation. This Culex quinquefasciatus (Southern house mosquito) protein is Eukaryotic translation initiation factor 3 subunit L.